The sequence spans 368 residues: tRNA/tmRNA (uracil-C(5))-methyltransferase (368 aa).

Gln192, Tyr220, Asn225, Glu241, and Asp301 together coordinate S-adenosyl-L-methionine. Residue Cys326 is the Nucleophile of the active site. The Proton acceptor role is filled by Glu360.

Belongs to the class I-like SAM-binding methyltransferase superfamily. RNA M5U methyltransferase family. TrmA subfamily.

The enzyme catalyses uridine(54) in tRNA + S-adenosyl-L-methionine = 5-methyluridine(54) in tRNA + S-adenosyl-L-homocysteine + H(+). It catalyses the reaction uridine(341) in tmRNA + S-adenosyl-L-methionine = 5-methyluridine(341) in tmRNA + S-adenosyl-L-homocysteine + H(+). In terms of biological role, dual-specificity methyltransferase that catalyzes the formation of 5-methyluridine at position 54 (m5U54) in all tRNAs, and that of position 341 (m5U341) in tmRNA (transfer-mRNA). This chain is tRNA/tmRNA (uracil-C(5))-methyltransferase, found in Actinobacillus pleuropneumoniae serotype 5b (strain L20).